Reading from the N-terminus, the 108-residue chain is Peptidyl-prolyl cis-trans isomerase Fkbp12 (108 aa).

The disordered stretch occupies residues 1–21; that stretch reads MGVQVVPIAPGDGSTYPKNGQ. The 89-residue stretch at 20-108 folds into the PPIase FKBP-type domain; the sequence is GQKVTVHYTG…TFDVELLKVE (89 aa).

This sequence belongs to the FKBP-type PPIase family. FKBP1 subfamily.

It localises to the cytoplasm. The catalysed reaction is [protein]-peptidylproline (omega=180) = [protein]-peptidylproline (omega=0). PPIases accelerate the folding of proteins. It catalyzes the cis-trans isomerization of proline imidic peptide bonds in oligopeptides. Binds to ligand-free TGF beta type I receptor, from which it is released upon a ligand-induced, type II receptor mediated phosphorylation of the type I receptor. Binding is inhibitory to the signaling pathways of the TGF beta family ligands. The protein is Peptidyl-prolyl cis-trans isomerase Fkbp12 of Drosophila melanogaster (Fruit fly).